We begin with the raw amino-acid sequence, 688 residues long: Probable xyloglucan glycosyltransferase 7 (688 aa).

The disordered stretch occupies residues 1–25 (MAPSWWGRSGGGGVGNGGGTPVVVK). Gly residues predominate over residues 8-20 (RSGGGGVGNGGGT). 2 consecutive transmembrane segments (helical) span residues 121–141 (VSLV…LQGW) and 183–203 (VALF…CFWI). Asp269 is an active-site residue. Residues Asp328 and Asp330 each contribute to the substrate site. The active site involves Asp422. A run of 2 helical transmembrane segments spans residues 500 to 520 (LILP…TMFV) and 525 to 545 (LPAW…ILPA). The disordered stretch occupies residues 604–635 (HSKQQRVGSAPNLDALTKEESNPKKDSKKKKH). Residues 619–628 (LTKEESNPKK) show a composition bias toward basic and acidic residues. The next 2 helical transmembrane spans lie at 638–657 (IYRK…ARSL) and 663–683 (IHFY…LDLI).

The protein belongs to the glycosyltransferase 2 family. Plant cellulose synthase-like C subfamily.

It localises to the golgi apparatus membrane. Probable beta-1,4-glucan synthase rather involved in the synthesis of the xyloglucan backbone than cellulose. Seems to work simultaneously with xyloglucan 6-xylosyltransferase. Xyloglucan is a noncellulosic polysaccharides of plant cell wall and consists of a glucan backbone substituted by xylose, galactose and fucose. This is Probable xyloglucan glycosyltransferase 7 (CSLC7) from Oryza sativa subsp. japonica (Rice).